A 167-amino-acid chain; its full sequence is Heme-degrading monooxygenase (167 aa).

The interval 1 to 50 is important for catalysis; that stretch reads MKKVFITTGTEHYLRQLMANYTGGNVTLLQNFSQSLLYQESTGEKLFQEG. Positions 67–154 constitute an ABM domain; sequence VVVFEYIHLR…NNTQSGFSHE (88 aa).

The protein belongs to the antibiotic biosynthesis monooxygenase family. In terms of assembly, monomer.

It is found in the cytoplasm. In terms of biological role, catalyzes the degradation of heme to biliverdin in the presence of a suitable electron donor such as ascorbate, with the subsequent release of iron. Hardly any CO is released by the heme degradation reaction. Binds heme. Allows bacterial pathogens to use the host heme as an iron source. Release of iron from heme may play a crucial role in the pathogenicity of L.monocytogenes. The sequence is that of Heme-degrading monooxygenase from Listeria monocytogenes serovar 1/2a (strain ATCC BAA-679 / EGD-e).